The following is a 132-amino-acid chain: UPF0299 membrane protein YohJ (132 aa).

The next 4 helical transmembrane spans lie at 7–27, 31–51, 63–83, and 93–113; these read IIWQ…AGIF, LLPV…VLLA, GCYV…VGVM, and FGPV…VMSW.

It belongs to the UPF0299 family.

It localises to the cell inner membrane. This is UPF0299 membrane protein YohJ from Shigella dysenteriae serotype 1 (strain Sd197).